Reading from the N-terminus, the 352-residue chain is 3-isopropylmalate dehydrogenase (352 aa).

Substrate contacts are provided by Arg-96, Arg-106, Arg-134, and Asp-220. The Mg(2+) site is built by Asp-220, Asp-244, and Asp-248. 277 to 289 (GSAPDIAGKNLAN) is an NAD(+) binding site.

The protein belongs to the isocitrate and isopropylmalate dehydrogenases family. LeuB type 1 subfamily. Homodimer. Mg(2+) serves as cofactor. Requires Mn(2+) as cofactor.

Its subcellular location is the cytoplasm. The catalysed reaction is (2R,3S)-3-isopropylmalate + NAD(+) = 4-methyl-2-oxopentanoate + CO2 + NADH. The protein operates within amino-acid biosynthesis; L-leucine biosynthesis; L-leucine from 3-methyl-2-oxobutanoate: step 3/4. Its function is as follows. Catalyzes the oxidation of 3-carboxy-2-hydroxy-4-methylpentanoate (3-isopropylmalate) to 3-carboxy-4-methyl-2-oxopentanoate. The product decarboxylates to 4-methyl-2 oxopentanoate. This chain is 3-isopropylmalate dehydrogenase, found in Desulfitobacterium hafniense (strain Y51).